Consider the following 223-residue polypeptide: MOB kinase activator-like 4 (223 aa).

The segment at 1-21 (MKMADGSTILRRNRPGTKSKD) is disordered. Positions 92, 97, 169, and 174 each coordinate Zn(2+).

It belongs to the MOB1/phocein family.

The polypeptide is MOB kinase activator-like 4 (Mob4) (Drosophila melanogaster (Fruit fly)).